Here is a 306-residue protein sequence, read N- to C-terminus: Ribonuclease H2 subunit B (306 aa).

The disordered stretch occupies residues 232–285 (LPDLSSPTPEPPVKKRKVSEAPVEAEEDYTKFNSDSKNKKSNSKMTAAQKSLAK). A compositionally biased stretch (basic and acidic residues) spans 259-269 (DYTKFNSDSKN).

This sequence belongs to the RNase H2 subunit B family. The RNase H2 complex is a heterotrimer composed of the catalytic subunit rnaseh2a and the non-catalytic subunits rnaseh2b and rnaseh2c.

It localises to the nucleus. Functionally, non catalytic subunit of RNase H2, an endonuclease that specifically degrades the RNA of RNA:DNA hybrids. Participates in DNA replication, possibly by mediating the removal of lagging-strand Okazaki fragment RNA primers during DNA replication. Mediates the excision of single ribonucleotides from DNA:RNA duplexes. This is Ribonuclease H2 subunit B (rnaseh2b) from Xenopus tropicalis (Western clawed frog).